We begin with the raw amino-acid sequence, 432 residues long: Trigger factor (432 aa).

The PPIase FKBP-type domain maps to 161–246 (EDRVTIDFTG…LKKVEERELP (86 aa)).

This sequence belongs to the FKBP-type PPIase family. Tig subfamily. As to quaternary structure, homodimer and monomer. In vivo most of the ribosomes are in complex with monomeric TF. Uncomplexed TF, however, is in a monomer-dimer equilibrium with approximately two thirds of TF existing in a dimeric state.

It is found in the cytoplasm. It catalyses the reaction [protein]-peptidylproline (omega=180) = [protein]-peptidylproline (omega=0). Functionally, involved in protein export. Acts as a chaperone by maintaining the newly synthesized protein in an open conformation. Functions as a peptidyl-prolyl cis-trans isomerase. The chain is Trigger factor from Escherichia fergusonii (strain ATCC 35469 / DSM 13698 / CCUG 18766 / IAM 14443 / JCM 21226 / LMG 7866 / NBRC 102419 / NCTC 12128 / CDC 0568-73).